A 466-amino-acid polypeptide reads, in one-letter code: MIKLFNSLTNKKEPFVPIEEGKVKMYCCGPTVYNYIHIGNARPPIVYDMVRRYLTYRGYDVTFVSNFTDVDDKIIRAANELGEEVAAVAERFIKAYYADTCALNVKEADLHPRVTETMDDIIAFIADLEKKGFAYEAGGDVYFRTRKFNGYGKLSGQALDDLQSGARIEVDERKEDPLDFVLWKAAKPNEISWSSPWGEGRPGWHIECSAMIKKSLGDTIDIHAGGKDLTFPHHENEIAQSEALTGKKLANYWMHNGFVNINNEKMSKSLGNFVLAHDIIQQYSPEVVRFFMLTAHYRTPINFSDELLKGAEAGLERLKNTVANLQHRLAETADMGAEEEWLEKIAGAKQRFIEEMDDDFNSANAISVLFDLAKEANIYMSEAQTSKKVLNAFLELFAEFGEVLGVSFTQQEEELLDAEIEALIEERNVARKERNFARADEIRDLLKEKNIVLEDTPQGVRWKRGS.

Cys28 serves as a coordination point for Zn(2+). The 'HIGH' region signature appears at 30–40; sequence PTVYNYIHIGN. Residues Cys208, His233, and Glu237 each contribute to the Zn(2+) site. The 'KMSKS' region motif lies at 265–269; that stretch reads KMSKS. Lys268 provides a ligand contact to ATP. At Ser269 the chain carries Phosphoserine.

It belongs to the class-I aminoacyl-tRNA synthetase family. As to quaternary structure, monomer. Zn(2+) is required as a cofactor.

It localises to the cytoplasm. It catalyses the reaction tRNA(Cys) + L-cysteine + ATP = L-cysteinyl-tRNA(Cys) + AMP + diphosphate. The sequence is that of Cysteine--tRNA ligase from Shouchella clausii (strain KSM-K16) (Alkalihalobacillus clausii).